Here is a 52-residue protein sequence, read N- to C-terminus: UPF0057 membrane protein PA0567 (52 aa).

Transmembrane regions (helical) follow at residues 6 to 26 and 29 to 49; these read ILIA…FGGA and LNIL…VYII.

It belongs to the UPF0057 (PMP3) family.

Its subcellular location is the cell membrane. This is UPF0057 membrane protein PA0567 from Pseudomonas aeruginosa (strain ATCC 15692 / DSM 22644 / CIP 104116 / JCM 14847 / LMG 12228 / 1C / PRS 101 / PAO1).